A 78-amino-acid polypeptide reads, in one-letter code: Mitotic-spindle organizing protein 1 (78 aa).

Ala-2 carries the N-acetylalanine modification.

This sequence belongs to the MOZART1 family. As to quaternary structure, associates with the gamma-tubulin ring complex (gTuRC) consisting of TUBGCP2, TUBGCP3, TUBGCP4, TUBGCP5 and TUBGCP6 and gamma-tubulin TUBG1 or TUBG2; within the complex, interacts with TUBGCP3 and TUBGCP6 to form a luminal bridge with actin that stabilizes the initial structure during complex assembly. Interacts with TUBG1.

The protein resides in the cytoplasm. It localises to the cytoskeleton. The protein localises to the microtubule organizing center. Its subcellular location is the centrosome. It is found in the spindle. In terms of biological role, required for the recruitment and the assembly of the gamma-tubulin ring complex (gTuRC) at the centrosome. The gTuRC regulates the minus-end nucleation of alpha-beta tubulin heterodimers that grow into microtubule protafilaments, a critical step in centrosome duplication and spindle formation. The protein is Mitotic-spindle organizing protein 1 (Mzt1) of Mus musculus (Mouse).